Reading from the N-terminus, the 209-residue chain is MKPLTPRQQEVFDLIKSKIDETGMPPTRAEIAKELGFRSANAAEEHLKALARKQVIEMVPGASRGIRILVDNAANEEEAETGLPLIGRVAAGEPILAQEHVEAHYQVDPSMFRPQADFLLRVHGESMKNIGILDGDLLAVHKTQDVRNGQVVVARVEDDVTVKRLERKGSKVFLHAENEEFAPIEVDLAAQSLTIEGIAVGVIRNSTWM.

The segment at residues 28 to 48 (RAEIAKELGFRSANAAEEHLK) is a DNA-binding region (H-T-H motif). Residues Ser-126 and Lys-163 each act as for autocatalytic cleavage activity in the active site.

Belongs to the peptidase S24 family. As to quaternary structure, homodimer.

It carries out the reaction Hydrolysis of Ala-|-Gly bond in repressor LexA.. In terms of biological role, represses a number of genes involved in the response to DNA damage (SOS response), including recA and lexA. In the presence of single-stranded DNA, RecA interacts with LexA causing an autocatalytic cleavage which disrupts the DNA-binding part of LexA, leading to derepression of the SOS regulon and eventually DNA repair. The polypeptide is LexA repressor (Vibrio cholerae serotype O1 (strain ATCC 39541 / Classical Ogawa 395 / O395)).